The following is a 70-amino-acid chain: UPF0352 protein Sden_2336 (70 aa).

This sequence belongs to the UPF0352 family.

This is UPF0352 protein Sden_2336 from Shewanella denitrificans (strain OS217 / ATCC BAA-1090 / DSM 15013).